A 292-amino-acid polypeptide reads, in one-letter code: Probable ABC transporter permease protein PH1215 (292 aa).

6 helical membrane-spanning segments follow: residues 10–30 (IILFLIPALILIGIFVYFAVV), 72–92 (LLLILLFVPGSLLLGLFLAIL), 106–126 (IYVLPFALSFVVTATLWAWMY), 160–180 (IIIALIWQFSGYTMIIYLAGI), 215–235 (LSAFVVLMVFSLKAFDFIWVL), and 261–281 (FAYGAAIATILLLMALVVVLP). An ABC transmembrane type-1 domain is found at 68–284 (LRNNLLLILL…ALVVVLPYLY (217 aa)).

This sequence belongs to the binding-protein-dependent transport system permease family. MalFG subfamily.

The protein resides in the cell membrane. Its function is as follows. Probably part of a binding-protein-dependent transport system PH1214/15/16. Probably responsible for the translocation of the substrate across the membrane. This is Probable ABC transporter permease protein PH1215 from Pyrococcus horikoshii (strain ATCC 700860 / DSM 12428 / JCM 9974 / NBRC 100139 / OT-3).